The following is a 107-amino-acid chain: U1-lycotoxin-Ls1c (107 aa).

An N-terminal signal peptide occupies residues 1–20 (MMKVLVVVALLVTLISYSSS). A propeptide spanning residues 21 to 41 (EGIDDLEADELLSLMANEQTR) is cleaved from the precursor. Intrachain disulfides connect Cys-44-Cys-59, Cys-51-Cys-68, Cys-58-Cys-86, and Cys-70-Cys-84.

The protein belongs to the neurotoxin 19 (CSTX) family. 04 (U1-Lctx) subfamily. As to expression, expressed by the venom gland.

Its subcellular location is the secreted. In Lycosa singoriensis (Wolf spider), this protein is U1-lycotoxin-Ls1c.